Consider the following 179-residue polypeptide: Peptidyl-tRNA hydrolase 2, mitochondrial (179 aa).

Residues 15-37 (STLGLAVGVACGMCLGWSLRVCF) traverse the membrane as a helical segment. Residues K47, K76, K81, K95, K106, K115, K171, and K177 each participate in a glycyl lysine isopeptide (Lys-Gly) (interchain with G-Cter in ubiquitin) cross-link.

The protein belongs to the PTH2 family. As to quaternary structure, monomer. In terms of processing, ubiquitinated by PRKN during mitophagy, leading to its degradation and enhancement of mitophagy. Deubiquitinated by USP30.

The protein resides in the mitochondrion outer membrane. The enzyme catalyses an N-acyl-L-alpha-aminoacyl-tRNA + H2O = an N-acyl-L-amino acid + a tRNA + H(+). Its function is as follows. Peptidyl-tRNA hydrolase which releases tRNAs from the ribosome during protein synthesis. Promotes caspase-independent apoptosis by regulating the function of two transcriptional regulators, AES and TLE1. This is Peptidyl-tRNA hydrolase 2, mitochondrial (PTRH2) from Homo sapiens (Human).